We begin with the raw amino-acid sequence, 267 residues long: Small ribosomal subunit protein uS2 (267 aa).

Basic and acidic residues predominate over residues 233–250; that stretch reads RAESDKAETDKVEVEGKG. The disordered stretch occupies residues 233 to 267; it reads RAESDKAETDKVEVEGKGEAPAAEAAEVVESADKA. Positions 251-261 are enriched in low complexity; that stretch reads EAPAAEAAEVV.

This sequence belongs to the universal ribosomal protein uS2 family.

This is Small ribosomal subunit protein uS2 from Syntrophotalea carbinolica (strain DSM 2380 / NBRC 103641 / GraBd1) (Pelobacter carbinolicus).